A 900-amino-acid chain; its full sequence is Endoglucanase H (900 aa).

The N-terminal stretch at 1–44 (MKKRLLVSFLVLSIIVGLLSFQSLGNYNSGLKIGAWVGTQPSES) is a signal peptide. A GH26 domain is found at 45–298 (AIKSFQELQG…NSSPEALAAY (254 aa)). Catalysis depends on E131, which acts as the Proton donor. E244 functions as the Nucleophile in the catalytic mechanism. Positions 300–630 (EAIGAGSSNP…DTEILNALFN (331 aa)) are catalytic. The disordered stretch occupies residues 303–326 (GAGSSNPTPTPTWTSTPPSSSPKA). Positions 306 to 324 (SSNPTPTPTWTSTPPSSSP) are enriched in low complexity. E460 functions as the Proton donor in the catalytic mechanism. The active-site Nucleophile is the E565. The CBM11 domain occupies 655-900 (AVGEKMLDDF…LLKAISEIPI (246 aa)). A Dockerin domain is found at 827-900 (PSIKHGDLNF…LLKAISEIPI (74 aa)).

In the N-terminal section; belongs to the glycosyl hydrolase 5 (cellulase A) family. The protein in the C-terminal section; belongs to the glycosyl hydrolase 26 family.

It catalyses the reaction Endohydrolysis of (1-&gt;4)-beta-D-glucosidic linkages in cellulose, lichenin and cereal beta-D-glucans.. Its function is as follows. This enzyme catalyzes the endohydrolysis of 1,4-beta-glucosidic linkages in cellulose, lichenin and cereal beta-D-glucans. The chain is Endoglucanase H (celH) from Acetivibrio thermocellus (strain ATCC 27405 / DSM 1237 / JCM 9322 / NBRC 103400 / NCIMB 10682 / NRRL B-4536 / VPI 7372) (Clostridium thermocellum).